The primary structure comprises 717 residues: DNA-binding protein RFX2 (717 aa).

The disordered stretch occupies residues 1–28 (MQNSEGGADSPASVALRPAAQPMPASPQ). Residue Ser-26 is modified to Phosphoserine. A DNA-binding region (RFX-type winged-helix) is located at residues 194–269 (HLQWLLDNYE…YHYYGIRLKP (76 aa)). The tract at residues 286–318 (RQQPTHQKPRYRPAQKSDSLGDGSAHSNMHGMP) is disordered. Residue Ser-411 is modified to Phosphoserine. A compositionally biased stretch (basic and acidic residues) spans 685–710 (DGHSSEADVDGRSLGEPLVKRERSDP). The segment at 685–717 (DGHSSEADVDGRSLGEPLVKRERSDPSHPLQGI) is disordered.

Belongs to the RFX family. In terms of assembly, homodimer; probably only forms homodimers in testis. Heterodimer; heterodimerizes with RFX1 and RFX3.

It is found in the nucleus. The protein resides in the cytoplasm. Its function is as follows. Transcription factor that acts as a key regulator of spermatogenesis. Acts by regulating expression of genes required for the haploid phase during spermiogenesis, such as genes required for cilium assembly and function. Recognizes and binds the X-box, a regulatory motif with DNA sequence 5'-GTNRCC(0-3N)RGYAAC-3' present on promoters. Probably activates transcription of the testis-specific histone gene H1-6. The sequence is that of DNA-binding protein RFX2 (Rfx2) from Mus musculus (Mouse).